Here is a 182-residue protein sequence, read N- to C-terminus: Adenine phosphoribosyltransferase (182 aa).

This sequence belongs to the purine/pyrimidine phosphoribosyltransferase family. As to quaternary structure, homodimer.

It is found in the cytoplasm. The catalysed reaction is AMP + diphosphate = 5-phospho-alpha-D-ribose 1-diphosphate + adenine. The protein operates within purine metabolism; AMP biosynthesis via salvage pathway; AMP from adenine: step 1/1. Functionally, catalyzes a salvage reaction resulting in the formation of AMP, that is energically less costly than de novo synthesis. This chain is Adenine phosphoribosyltransferase, found in Campylobacter jejuni subsp. jejuni serotype O:23/36 (strain 81-176).